The sequence spans 309 residues: Dehydrogenase/reductase SDR family member 7B (309 aa).

Topologically, residues methionine 1–threonine 4 are cytoplasmic. Residues threonine 5 to leucine 25 form a helical; Signal-anchor for type II membrane protein membrane-spanning segment. Over glutamine 26 to leucine 272 the chain is Lumenal. 2 residues coordinate NAD(+): serine 46 and leucine 48. Position 178 (serine 178) interacts with substrate. Residues tyrosine 191, lysine 195, and threonine 226 each contribute to the NAD(+) site. Tyrosine 191 acts as the Proton acceptor in catalysis.

It belongs to the short-chain dehydrogenases/reductases (SDR) family.

The protein resides in the endoplasmic reticulum membrane. In terms of biological role, putative oxidoreductase. The chain is Dehydrogenase/reductase SDR family member 7B (dhrs7b) from Xenopus tropicalis (Western clawed frog).